The sequence spans 445 residues: Phosphoglucosamine mutase (445 aa).

The Phosphoserine intermediate role is filled by Ser102. Positions 102, 241, 243, and 245 each coordinate Mg(2+). Ser102 bears the Phosphoserine mark.

This sequence belongs to the phosphohexose mutase family. The cofactor is Mg(2+). In terms of processing, activated by phosphorylation.

The enzyme catalyses alpha-D-glucosamine 1-phosphate = D-glucosamine 6-phosphate. Catalyzes the conversion of glucosamine-6-phosphate to glucosamine-1-phosphate. This is Phosphoglucosamine mutase from Variovorax paradoxus (strain S110).